The following is a 382-amino-acid chain: Glutamate 5-kinase (382 aa).

Position 15 (Lys15) interacts with ATP. Substrate is bound by residues Ser62, Asp149, and Asn161. Position 181 to 182 (181 to 182) interacts with ATP; that stretch reads TD. Residues 288–366 enclose the PUA domain; the sequence is RGSVSVDAGA…VEIERLLGYS (79 aa).

This sequence belongs to the glutamate 5-kinase family.

Its subcellular location is the cytoplasm. The catalysed reaction is L-glutamate + ATP = L-glutamyl 5-phosphate + ADP. Its pathway is amino-acid biosynthesis; L-proline biosynthesis; L-glutamate 5-semialdehyde from L-glutamate: step 1/2. Its function is as follows. Catalyzes the transfer of a phosphate group to glutamate to form L-glutamate 5-phosphate. This Delftia acidovorans (strain DSM 14801 / SPH-1) protein is Glutamate 5-kinase.